The sequence spans 767 residues: Lysyl oxidase homolog 2 (767 aa).

A signal peptide spans 1 to 19 (MLVTHIFLLTLSLSVPTLG). 4 SRCR domains span residues 51-152 (VRLA…VQCS), 181-295 (IRAI…VSCT), 319-418 (VRLR…VRCN), and 428-537 (VRLS…VSCV). 9 cysteine pairs are disulfide-bonded: Cys-77/Cys-141, Cys-90/Cys-151, Cys-121/Cys-131, Cys-211/Cys-284, Cys-224/Cys-294, Cys-258/Cys-268, Cys-344/Cys-407, Cys-357/Cys-417, and Cys-388/Cys-398. The N-linked (GlcNAc...) asparagine glycan is linked to Asn-281. An N-linked (GlcNAc...) asparagine glycan is attached at Asn-448. Cystine bridges form between Cys-457–Cys-523, Cys-470–Cys-536, and Cys-504–Cys-514. The tract at residues 541 to 744 (PDLVLNAALV…WMYNCHIGGS (204 aa)) is lysyl-oxidase like. Residues Asp-542 and Leu-543 each contribute to the Ca(2+) site. 4 disulfide bridges follow: Cys-566–Cys-618, Cys-572–Cys-688, Cys-650–Cys-666, and Cys-656–Cys-678. The Cu cation site is built by His-619, His-621, and His-623. Residue Asn-637 is glycosylated (N-linked (GlcNAc...) asparagine). The segment at residues 646–682 (KASFCLEDSECETDVQKQYACANFGEQGITVGCWDVY) is a cross-link (lysine tyrosylquinone (Lys-Tyr)). 2',4',5'-topaquinone is present on Tyr-682. Ca(2+) contacts are provided by Glu-715, Asp-717, Asn-720, and Asn-721. An intrachain disulfide couples Cys-725 to Cys-739.

This sequence belongs to the lysyl oxidase family. Requires Cu cation as cofactor. It depends on lysine tyrosylquinone residue as a cofactor. In terms of processing, the lysine tyrosylquinone cross-link (LTQ) is generated by condensation of the epsilon-amino group of a lysine with a topaquinone produced by oxidation of tyrosine.

The protein localises to the secreted. Its subcellular location is the extracellular space. It is found in the extracellular matrix. It localises to the basement membrane. The protein resides in the nucleus. The protein localises to the chromosome. Its subcellular location is the endoplasmic reticulum. The catalysed reaction is L-lysyl-[protein] + O2 + H2O = (S)-2-amino-6-oxohexanoyl-[protein] + H2O2 + NH4(+). Its function is as follows. Mediates the post-translational oxidative deamination of lysine residues on target proteins leading to the formation of deaminated lysine (allysine). Acts as a transcription corepressor and specifically mediates deamination of trimethylated 'Lys-4' of histone H3 (H3K4me3), a specific tag for epigenetic transcriptional activation. Shows no activity against histone H3 when it is trimethylated on 'Lys-9' (H3K9me3) or 'Lys-27' (H3K27me3) or when 'Lys-4' is monomethylated (H3K4me1) or dimethylated (H3K4me2). Also mediates deamination of methylated TAF10, a member of the transcription factor IID (TFIID) complex, which induces release of TAF10 from promoters, leading to inhibition of TFIID-dependent transcription. LOXL2-mediated deamination of TAF10 results in transcriptional repression of genes required for embryonic stem cell pluripotency. Involved in epithelial to mesenchymal transition (EMT) and participates in repression of E-cadherin, probably by mediating deamination of histone H3. When secreted into the extracellular matrix, promotes cross-linking of extracellular matrix proteins by mediating oxidative deamination of peptidyl lysine residues in precursors to fibrous collagen and elastin. Acts as a regulator of sprouting angiogenesis, probably via collagen IV scaffolding. Acts as a regulator of chondrocyte differentiation, probably by regulating expression of factors that control chondrocyte differentiation. This chain is Lysyl oxidase homolog 2 (loxl2), found in Xenopus tropicalis (Western clawed frog).